The chain runs to 296 residues: Acetylglutamate kinase (296 aa).

Residues Gly-67–Gly-68, Arg-89, and Asn-194 each bind substrate.

It belongs to the acetylglutamate kinase family. ArgB subfamily.

The protein localises to the cytoplasm. It carries out the reaction N-acetyl-L-glutamate + ATP = N-acetyl-L-glutamyl 5-phosphate + ADP. It participates in amino-acid biosynthesis; L-arginine biosynthesis; N(2)-acetyl-L-ornithine from L-glutamate: step 2/4. Its function is as follows. Catalyzes the ATP-dependent phosphorylation of N-acetyl-L-glutamate. The protein is Acetylglutamate kinase of Syntrophus aciditrophicus (strain SB).